We begin with the raw amino-acid sequence, 591 residues long: MSSTENPDSVAAARELEALRAEASALRRQLAESPEQLREMESRVDSLSIRNTKLMDTLKEARQQLIALREEVDRLGQPPSGYGVLLGVHDDQTVDVFTSGRKMRLTCSPNVDAETLKLGQTVRLNEALTIVEAGNFERVGEISTLREVLDDGQRALVVGHADEERIVWLAEPLATVYEDSERESIAYDAESPTRKLRPGDSLLVDTKAGYAFERIPKAEVEDLVLEEVPDVHYDDIGGLGRQIEQIRDAVELPFLHKDLFHEYELRPPKGVLLYGPPGCGKTLIAKAVANSLAKKIAEARGQDSKEAKSYFLNIKGPELLNKFVGETERHIRLIFQRAREKASEGTPVIVFFDEMDSIFRTRGSGVSSDVETTVVPQLLSEIDGVEGLENVIVIGASNREDMIDPAILRPGRLDVKIKIERPDAESAQDIFSKYLVETLPVHSDDIAEFGGDRTACIRVMIERVVDRMYAESEENRFLEVTYANGDKEVLYFKDFNSGAMIQNIVDRAKKYAIKSVLDTGAPGLRVQHLFDSIVDEFSENEDLPNTTNPDDWARISGKKGERIVYIRTLVTGKNASASRAIDTESNTGQYL.

The stretch at 8 to 77 (DSVAAARELE…LREEVDRLGQ (70 aa)) forms a coiled coil. 278-283 (GCGKTL) contacts ATP. The segment at 590 to 591 (YL) is docks into pockets in the proteasome alpha-ring.

Belongs to the AAA ATPase family. As to quaternary structure, homohexamer. Assembles into a hexameric ring structure that caps the 20S proteasome core. Strongly interacts with the prokaryotic ubiquitin-like protein Pup through a hydrophobic interface; the interacting region of ARC lies in its N-terminal coiled-coil domain. There is one Pup binding site per ARC hexamer ring. Upon ATP-binding, the C-terminus of ARC interacts with the alpha-rings of the proteasome core, possibly by binding to the intersubunit pockets.

Its pathway is protein degradation; proteasomal Pup-dependent pathway. ATPase which is responsible for recognizing, binding, unfolding and translocation of pupylated proteins into the bacterial 20S proteasome core particle. May be essential for opening the gate of the 20S proteasome via an interaction with its C-terminus, thereby allowing substrate entry and access to the site of proteolysis. Thus, the C-termini of the proteasomal ATPase may function like a 'key in a lock' to induce gate opening and therefore regulate proteolysis. This Rhodococcus jostii (strain RHA1) protein is Proteasome-associated ATPase.